The chain runs to 405 residues: Arginine deiminase (405 aa).

Cys395 (amidino-cysteine intermediate) is an active-site residue.

The protein belongs to the arginine deiminase family.

Its subcellular location is the cytoplasm. The enzyme catalyses L-arginine + H2O = L-citrulline + NH4(+). It functions in the pathway amino-acid degradation; L-arginine degradation via ADI pathway; carbamoyl phosphate from L-arginine: step 1/2. In Rhodococcus erythropolis (strain PR4 / NBRC 100887), this protein is Arginine deiminase.